We begin with the raw amino-acid sequence, 598 residues long: UvrABC system protein C (598 aa).

The GIY-YIG domain maps to Asp-14–Ile-91. The 36-residue stretch at Asp-196–Met-231 folds into the UVR domain.

This sequence belongs to the UvrC family. In terms of assembly, interacts with UvrB in an incision complex.

It localises to the cytoplasm. Its function is as follows. The UvrABC repair system catalyzes the recognition and processing of DNA lesions. UvrC both incises the 5' and 3' sides of the lesion. The N-terminal half is responsible for the 3' incision and the C-terminal half is responsible for the 5' incision. The sequence is that of UvrABC system protein C from Streptococcus pyogenes serotype M6 (strain ATCC BAA-946 / MGAS10394).